Here is a 235-residue protein sequence, read N- to C-terminus: Aspartate/glutamate leucyltransferase (235 aa).

Belongs to the R-transferase family. Bpt subfamily.

It is found in the cytoplasm. It carries out the reaction N-terminal L-glutamyl-[protein] + L-leucyl-tRNA(Leu) = N-terminal L-leucyl-L-glutamyl-[protein] + tRNA(Leu) + H(+). It catalyses the reaction N-terminal L-aspartyl-[protein] + L-leucyl-tRNA(Leu) = N-terminal L-leucyl-L-aspartyl-[protein] + tRNA(Leu) + H(+). Its function is as follows. Functions in the N-end rule pathway of protein degradation where it conjugates Leu from its aminoacyl-tRNA to the N-termini of proteins containing an N-terminal aspartate or glutamate. This is Aspartate/glutamate leucyltransferase from Pseudomonas putida (strain W619).